The chain runs to 678 residues: DNA ligase (678 aa).

Residues 47-51 (DSDYD), 96-97 (SL), and Glu-122 contribute to the NAD(+) site. Lys-124 acts as the N6-AMP-lysine intermediate in catalysis. Arg-145, Glu-182, Lys-300, and Lys-324 together coordinate NAD(+). Zn(2+)-binding residues include Cys-418, Cys-421, Cys-436, and Cys-442. One can recognise a BRCT domain in the interval 602–678 (AYNESFTGKT…ILEDNLKDLL (77 aa)).

It belongs to the NAD-dependent DNA ligase family. LigA subfamily. The cofactor is Mg(2+). It depends on Mn(2+) as a cofactor.

It carries out the reaction NAD(+) + (deoxyribonucleotide)n-3'-hydroxyl + 5'-phospho-(deoxyribonucleotide)m = (deoxyribonucleotide)n+m + AMP + beta-nicotinamide D-nucleotide.. Its function is as follows. DNA ligase that catalyzes the formation of phosphodiester linkages between 5'-phosphoryl and 3'-hydroxyl groups in double-stranded DNA using NAD as a coenzyme and as the energy source for the reaction. It is essential for DNA replication and repair of damaged DNA. The polypeptide is DNA ligase (Francisella tularensis subsp. holarctica (strain FTNF002-00 / FTA)).